The chain runs to 104 residues: Ribonuclease P protein component 4 (104 aa).

Zn(2+)-binding residues include Cys63, Cys66, Cys89, and Cys92.

Belongs to the eukaryotic/archaeal RNase P protein component 4 family. In terms of assembly, consists of a catalytic RNA component and at least 4-5 protein subunits. The cofactor is Zn(2+).

It localises to the cytoplasm. It carries out the reaction Endonucleolytic cleavage of RNA, removing 5'-extranucleotides from tRNA precursor.. In terms of biological role, part of ribonuclease P, a protein complex that generates mature tRNA molecules by cleaving their 5'-ends. The sequence is that of Ribonuclease P protein component 4 from Methanosphaera stadtmanae (strain ATCC 43021 / DSM 3091 / JCM 11832 / MCB-3).